The sequence spans 488 residues: Protein nucleotidyltransferase YdiU (488 aa).

8 residues coordinate ATP: Gly91, Gly93, Arg94, Lys114, Asp126, Gly127, Arg177, and Arg184. Positions 108–127 are disordered; that stretch reads RFDIQLKGSGPTPYSRRGDG. The active-site Proton acceptor is Asp253. Asn254 and Asp263 together coordinate Mg(2+). Asp263 serves as a coordination point for ATP.

This sequence belongs to the SELO family. It depends on Mg(2+) as a cofactor. Requires Mn(2+) as cofactor.

The catalysed reaction is L-seryl-[protein] + ATP = 3-O-(5'-adenylyl)-L-seryl-[protein] + diphosphate. It carries out the reaction L-threonyl-[protein] + ATP = 3-O-(5'-adenylyl)-L-threonyl-[protein] + diphosphate. It catalyses the reaction L-tyrosyl-[protein] + ATP = O-(5'-adenylyl)-L-tyrosyl-[protein] + diphosphate. The enzyme catalyses L-histidyl-[protein] + UTP = N(tele)-(5'-uridylyl)-L-histidyl-[protein] + diphosphate. The catalysed reaction is L-seryl-[protein] + UTP = O-(5'-uridylyl)-L-seryl-[protein] + diphosphate. It carries out the reaction L-tyrosyl-[protein] + UTP = O-(5'-uridylyl)-L-tyrosyl-[protein] + diphosphate. In terms of biological role, nucleotidyltransferase involved in the post-translational modification of proteins. It can catalyze the addition of adenosine monophosphate (AMP) or uridine monophosphate (UMP) to a protein, resulting in modifications known as AMPylation and UMPylation. This is Protein nucleotidyltransferase YdiU from Bacillus cereus (strain AH820).